The primary structure comprises 330 residues: Phosphate acyltransferase (330 aa).

It belongs to the PlsX family. Homodimer. Probably interacts with PlsY.

It localises to the cytoplasm. It catalyses the reaction a fatty acyl-[ACP] + phosphate = an acyl phosphate + holo-[ACP]. It participates in lipid metabolism; phospholipid metabolism. Its function is as follows. Catalyzes the reversible formation of acyl-phosphate (acyl-PO(4)) from acyl-[acyl-carrier-protein] (acyl-ACP). This enzyme utilizes acyl-ACP as fatty acyl donor, but not acyl-CoA. The polypeptide is Phosphate acyltransferase (Bacillus thuringiensis (strain Al Hakam)).